The chain runs to 318 residues: Ferredoxin--NADP reductase (318 aa).

FAD is bound by residues D33, Q41, Y46, V84, F115, D276, and T316.

Belongs to the ferredoxin--NADP reductase type 2 family. Homodimer. FAD is required as a cofactor.

The enzyme catalyses 2 reduced [2Fe-2S]-[ferredoxin] + NADP(+) + H(+) = 2 oxidized [2Fe-2S]-[ferredoxin] + NADPH. The chain is Ferredoxin--NADP reductase from Lactobacillus gasseri (strain ATCC 33323 / DSM 20243 / BCRC 14619 / CIP 102991 / JCM 1131 / KCTC 3163 / NCIMB 11718 / NCTC 13722 / AM63).